The following is a 212-amino-acid chain: Peroxisomal membrane protein 4 (212 aa).

The next 2 membrane-spanning stretches (helical) occupy residues 97 to 117 (GKTYQAHSFVSAFIGGLLVFG) and 153 to 173 (LDPFPWFSGLVWGLVLWLFEY). A glycan (N-linked (GlcNAc...) asparagine) is linked at asparagine 206.

Belongs to the peroxisomal membrane protein PXMP2/4 family. In terms of assembly, interacts with PEX19.

The protein resides in the peroxisome membrane. In Bos taurus (Bovine), this protein is Peroxisomal membrane protein 4 (PXMP4).